Consider the following 196-residue polypeptide: Glycerol-3-phosphate acyltransferase (196 aa).

The next 5 helical transmembrane spans lie at 1-21, 53-73, 78-98, 112-132, and 152-172; these read MIIL…GYLT, AITA…GSLL, GALV…FLKF, IMTS…VMLI, and LLFG…VMIF.

The protein belongs to the PlsY family. In terms of assembly, probably interacts with PlsX.

Its subcellular location is the cell membrane. It carries out the reaction an acyl phosphate + sn-glycerol 3-phosphate = a 1-acyl-sn-glycero-3-phosphate + phosphate. It participates in lipid metabolism; phospholipid metabolism. Its function is as follows. Catalyzes the transfer of an acyl group from acyl-phosphate (acyl-PO(4)) to glycerol-3-phosphate (G3P) to form lysophosphatidic acid (LPA). This enzyme utilizes acyl-phosphate as fatty acyl donor, but not acyl-CoA or acyl-ACP. In Carboxydothermus hydrogenoformans (strain ATCC BAA-161 / DSM 6008 / Z-2901), this protein is Glycerol-3-phosphate acyltransferase.